The sequence spans 290 residues: 4-diphosphocytidyl-2-C-methyl-D-erythritol kinase (290 aa).

K14 is a catalytic residue. 103 to 113 provides a ligand contact to ATP; it reads PMGGGLGGGSS. D145 is an active-site residue.

It belongs to the GHMP kinase family. IspE subfamily. As to quaternary structure, homodimer.

It catalyses the reaction 4-CDP-2-C-methyl-D-erythritol + ATP = 4-CDP-2-C-methyl-D-erythritol 2-phosphate + ADP + H(+). The protein operates within isoprenoid biosynthesis; isopentenyl diphosphate biosynthesis via DXP pathway; isopentenyl diphosphate from 1-deoxy-D-xylulose 5-phosphate: step 3/6. Catalyzes the phosphorylation of the position 2 hydroxy group of 4-diphosphocytidyl-2C-methyl-D-erythritol. The chain is 4-diphosphocytidyl-2-C-methyl-D-erythritol kinase from Pectobacterium carotovorum subsp. carotovorum (strain PC1).